We begin with the raw amino-acid sequence, 188 residues long: Pyridoxal 5'-phosphate synthase subunit PdxT (188 aa).

Position 46–48 (46–48 (GES)) interacts with L-glutamine. The active-site Nucleophile is the Cys-78. L-glutamine-binding positions include Arg-106 and 132–133 (IR). Residues His-169 and Glu-171 each act as charge relay system in the active site.

This sequence belongs to the glutaminase PdxT/SNO family. As to quaternary structure, in the presence of PdxS, forms a dodecamer of heterodimers. Only shows activity in the heterodimer.

It carries out the reaction aldehydo-D-ribose 5-phosphate + D-glyceraldehyde 3-phosphate + L-glutamine = pyridoxal 5'-phosphate + L-glutamate + phosphate + 3 H2O + H(+). It catalyses the reaction L-glutamine + H2O = L-glutamate + NH4(+). It participates in cofactor biosynthesis; pyridoxal 5'-phosphate biosynthesis. In terms of biological role, catalyzes the hydrolysis of glutamine to glutamate and ammonia as part of the biosynthesis of pyridoxal 5'-phosphate. The resulting ammonia molecule is channeled to the active site of PdxS. The protein is Pyridoxal 5'-phosphate synthase subunit PdxT of Tropheryma whipplei (strain Twist) (Whipple's bacillus).